A 219-amino-acid polypeptide reads, in one-letter code: Sugar transporter SWEET1 (219 aa).

7 consecutive transmembrane segments (helical) span residues 3–23 (FLQLLSCACIIFTVGMFTTGL), 38–58 (VQFLPFLTTCLNNLGWLYYGL), 63–83 (GTVIFVNIIGAFLQTVYIATY), 98–118 (LLMVSVLCVAWVYFSLVISPG), 125–145 (LGLTCSVFTISMYLSPLADLL), 156–176 (LSFSLTVATFFTSTSWTLYGL), and 189–209 (PGIFTSLIRFFLFWWFGAVIP). In terms of domain architecture, MtN3/slv 1 spans 5–90 (QLLSCACIIF…ATYCHYTKEK (86 aa)). The 81-residue stretch at 124–204 (QLGLTCSVFT…LIRFFLFWWF (81 aa)) folds into the MtN3/slv 2 domain.

It belongs to the SWEET sugar transporter family.

Its subcellular location is the golgi apparatus membrane. The protein localises to the cell membrane. Mediates sugar transport across membranes. This Danio rerio (Zebrafish) protein is Sugar transporter SWEET1 (slc50a1).